The following is a 256-amino-acid chain: Thiazole synthase (256 aa).

The active-site Schiff-base intermediate with DXP is the lysine 96. Residues glycine 157, 183–184 (AG), and 205–206 (NT) each bind 1-deoxy-D-xylulose 5-phosphate.

Belongs to the ThiG family. Homotetramer. Forms heterodimers with either ThiH or ThiS.

It is found in the cytoplasm. It carries out the reaction [ThiS sulfur-carrier protein]-C-terminal-Gly-aminoethanethioate + 2-iminoacetate + 1-deoxy-D-xylulose 5-phosphate = [ThiS sulfur-carrier protein]-C-terminal Gly-Gly + 2-[(2R,5Z)-2-carboxy-4-methylthiazol-5(2H)-ylidene]ethyl phosphate + 2 H2O + H(+). Its pathway is cofactor biosynthesis; thiamine diphosphate biosynthesis. In terms of biological role, catalyzes the rearrangement of 1-deoxy-D-xylulose 5-phosphate (DXP) to produce the thiazole phosphate moiety of thiamine. Sulfur is provided by the thiocarboxylate moiety of the carrier protein ThiS. In vitro, sulfur can be provided by H(2)S. This chain is Thiazole synthase, found in Bacillus cytotoxicus (strain DSM 22905 / CIP 110041 / 391-98 / NVH 391-98).